The following is a 524-amino-acid chain: Cytochrome P450 4F12 (524 aa).

2 helical membrane-spanning segments follow: residues 19-39 (WLLL…AWTY) and 87-107 (GFTV…PDTI). Cysteine 468 contributes to the heme binding site.

The protein belongs to the cytochrome P450 family. Requires heme as cofactor. As to expression, expressed in small intestine, liver, colon and heart.

The protein resides in the endoplasmic reticulum membrane. The protein localises to the microsome membrane. It catalyses the reaction an organic molecule + reduced [NADPH--hemoprotein reductase] + O2 = an alcohol + oxidized [NADPH--hemoprotein reductase] + H2O + H(+). It carries out the reaction (5Z,8Z,11Z,14Z)-eicosatetraenoate + reduced [NADPH--hemoprotein reductase] + O2 = 18-hydroxy-(5Z,8Z,11Z,14Z)-eicosatetraenoate + oxidized [NADPH--hemoprotein reductase] + H2O + H(+). The catalysed reaction is (7Z,10Z,13Z,16Z,19Z)-docosapentaenoate + reduced [NADPH--hemoprotein reductase] + O2 = 10,11-epoxy-(7Z,13Z,16Z,19Z)-docosatetraenoate + oxidized [NADPH--hemoprotein reductase] + H2O + H(+). The enzyme catalyses (7Z,10Z,13Z,16Z,19Z)-docosapentaenoate + reduced [NADPH--hemoprotein reductase] + O2 = 13,14-epoxy-(7Z,10Z,16Z,19Z)-docosatetraenoate + oxidized [NADPH--hemoprotein reductase] + H2O + H(+). It catalyses the reaction (7Z,10Z,13Z,16Z,19Z)-docosapentaenoate + reduced [NADPH--hemoprotein reductase] + O2 = 16,17-epoxy-(7Z,10Z,13Z,19Z)-docosatetraenoate + oxidized [NADPH--hemoprotein reductase] + H2O + H(+). It carries out the reaction (7Z,10Z,13Z,16Z,19Z)-docosapentaenoate + reduced [NADPH--hemoprotein reductase] + O2 = 19,20-epoxy-(7Z,10Z,13Z,16Z)-docosatetraenoate + oxidized [NADPH--hemoprotein reductase] + H2O + H(+). The catalysed reaction is (4Z,7Z,10Z,13Z,16Z,19Z)-docosahexaenoate + reduced [NADPH--hemoprotein reductase] + O2 = 10,11-epoxy-(4Z,7Z,13Z,16Z,19Z)-docosapentaenoate + oxidized [NADPH--hemoprotein reductase] + H2O + H(+). The enzyme catalyses (4Z,7Z,10Z,13Z,16Z,19Z)-docosahexaenoate + reduced [NADPH--hemoprotein reductase] + O2 = 13,14-epoxy-(4Z,7Z,10Z,16Z,19Z)-docosapentaenoate + oxidized [NADPH--hemoprotein reductase] + H2O + H(+). It catalyses the reaction (4Z,7Z,10Z,13Z,16Z,19Z)-docosahexaenoate + reduced [NADPH--hemoprotein reductase] + O2 = 16,17-epoxy-(4Z,7Z,10Z,13Z,19Z)-docosapentaenoate + oxidized [NADPH--hemoprotein reductase] + H2O + H(+). It carries out the reaction (4Z,7Z,10Z,13Z,16Z,19Z)-docosahexaenoate + reduced [NADPH--hemoprotein reductase] + O2 = 19,20-epoxy-(4Z,7Z,10Z,13Z,16Z)-docosapentaenoate + oxidized [NADPH--hemoprotein reductase] + H2O + H(+). It participates in lipid metabolism; arachidonate metabolism. Functionally, a cytochrome P450 monooxygenase involved in the metabolism of endogenous polyunsaturated fatty acids (PUFAs). Mechanistically, uses molecular oxygen inserting one oxygen atom into a substrate, and reducing the second into a water molecule, with two electrons provided by NADPH via cytochrome P450 reductase (CPR; NADPH-ferrihemoprotein reductase). Catalyzes the hydroxylation of carbon hydrogen bonds, with preference for omega-2 position. Metabolizes (5Z,8Z,11Z,14Z)-eicosatetraenoic acid (arachidonate) toward 18-hydroxy arachidonate. Catalyzes the epoxidation of double bonds of PUFAs such as docosapentaenoic and docosahexaenoic acids. Has low omega-hydroxylase activity toward leukotriene B4 and arachidonate. Involved in the metabolism of xenobiotics. Catalyzes the hydroxylation of the antihistamine drug ebastine. This Homo sapiens (Human) protein is Cytochrome P450 4F12.